Consider the following 359-residue polypeptide: 3-dehydroquinate synthase (359 aa).

NAD(+)-binding positions include 69-74, 103-107, 127-128, Lys139, Lys148, and 166-169; these read SGESSK, GVVGD, TT, and TLST. Residues Glu181, His242, and His259 each coordinate Zn(2+).

The protein belongs to the sugar phosphate cyclases superfamily. Dehydroquinate synthase family. Requires NAD(+) as cofactor. The cofactor is Co(2+). Zn(2+) is required as a cofactor.

It is found in the cytoplasm. It carries out the reaction 7-phospho-2-dehydro-3-deoxy-D-arabino-heptonate = 3-dehydroquinate + phosphate. It participates in metabolic intermediate biosynthesis; chorismate biosynthesis; chorismate from D-erythrose 4-phosphate and phosphoenolpyruvate: step 2/7. In terms of biological role, catalyzes the conversion of 3-deoxy-D-arabino-heptulosonate 7-phosphate (DAHP) to dehydroquinate (DHQ). This chain is 3-dehydroquinate synthase, found in Oceanobacillus iheyensis (strain DSM 14371 / CIP 107618 / JCM 11309 / KCTC 3954 / HTE831).